The chain runs to 367 residues: 4-hydroxyphenylpyruvate dioxygenase (367 aa).

2 consecutive VOC domains span residues 3 to 135 and 166 to 324; these read GFDH…FVDR and LIDH…IFTN. The Fe cation site is built by His169, His252, and Glu335.

This sequence belongs to the 4HPPD family. Fe cation serves as cofactor.

The enzyme catalyses 3-(4-hydroxyphenyl)pyruvate + O2 = homogentisate + CO2. Its pathway is amino-acid degradation; L-phenylalanine degradation; acetoacetate and fumarate from L-phenylalanine: step 3/6. Its function is as follows. Key enzyme in the degradation of tyrosine. The polypeptide is 4-hydroxyphenylpyruvate dioxygenase (hpd) (Dictyostelium discoideum (Social amoeba)).